The following is a 446-amino-acid chain: Iroquois-class homeodomain protein IRX-6 (446 aa).

The segment at residues 146 to 208 is a DNA-binding region (homeobox); that stretch reads GAGRRKNATR…NARRRLKKEN (63 aa). 2 disordered regions span residues 208–273 and 362–394; these read NKMT…EDEE and AVEG…RLSV. A compositionally biased stretch (basic and acidic residues) spans 217 to 226; the sequence is KGGEERKAEG. Residues 256–273 show a composition bias toward acidic residues; the sequence is LEDLEEEEEEEEEAEDEE.

This sequence belongs to the TALE/IRO homeobox family.

The protein resides in the nucleus. In terms of biological role, transcription factor. Binds to the iroquois binding site (IBS) motif of target genes to regulate gene expression; functions as a transcriptional activator or repressor. Modulates expression of RCVRN, VSX1, BHLHE22/BHLHB5 and TACR3/Nk3r. Required downstream of retinal bipolar cell specification for the terminal differentiation of type 2, type 3a and possibly type 6 bipolar cells. The sequence is that of Iroquois-class homeodomain protein IRX-6 (IRX6) from Homo sapiens (Human).